The sequence spans 190 residues: Threonylcarbamoyl-AMP synthase (190 aa).

Residues 9–190 (FLQLALARQT…IDIVTGQQFR (182 aa)) form the YrdC-like domain.

This sequence belongs to the SUA5 family. TsaC subfamily.

It localises to the cytoplasm. It catalyses the reaction L-threonine + hydrogencarbonate + ATP = L-threonylcarbamoyladenylate + diphosphate + H2O. In terms of biological role, required for the formation of a threonylcarbamoyl group on adenosine at position 37 (t(6)A37) in tRNAs that read codons beginning with adenine. Catalyzes the conversion of L-threonine, HCO(3)(-)/CO(2) and ATP to give threonylcarbamoyl-AMP (TC-AMP) as the acyladenylate intermediate, with the release of diphosphate. This chain is Threonylcarbamoyl-AMP synthase, found in Marinobacter nauticus (strain ATCC 700491 / DSM 11845 / VT8) (Marinobacter aquaeolei).